Reading from the N-terminus, the 241-residue chain is MSREDLEARLRAIGAERYHDKHPFHHKLHGGDCTPDQVRAWVINRWAYQAAIPMKDAAFLSRCADPDIRRAWRSRIEDHDGGVDSGGGLRRWLKLAEAVGLDPDYVASGRGILPATRFAVEAYFHYVREQPLLQAVASSLTELFAPKIHENRIEGLLRHYDFADESSLSYFRKRLSEAPRDVAYGLGWVLDHADTPEKEDMACAALIFKTDVLWAQLDALWGAYVDGHVPPGAWRPGEGMA.

It belongs to the PqqC family.

It carries out the reaction 6-(2-amino-2-carboxyethyl)-7,8-dioxo-1,2,3,4,7,8-hexahydroquinoline-2,4-dicarboxylate + 3 O2 = pyrroloquinoline quinone + 2 H2O2 + 2 H2O + H(+). It participates in cofactor biosynthesis; pyrroloquinoline quinone biosynthesis. Functionally, ring cyclization and eight-electron oxidation of 3a-(2-amino-2-carboxyethyl)-4,5-dioxo-4,5,6,7,8,9-hexahydroquinoline-7,9-dicarboxylic-acid to PQQ. This Ruegeria pomeroyi (strain ATCC 700808 / DSM 15171 / DSS-3) (Silicibacter pomeroyi) protein is Pyrroloquinoline-quinone synthase.